We begin with the raw amino-acid sequence, 465 residues long: E3 ubiquitin-protein ligase TRIM38 (465 aa).

The RING-type zinc-finger motif lies at 16-63 (CSICLSLMTNPVSINCGHSYCHLCITDFFKNPSQKQLRQETFCCPQCR). Residue S70 is modified to Phosphoserine. The B box-type zinc finger occupies 88–129 (DQEMSCEEHGEQFHLFCEDEGQLICWRCERAPQHKGHTTALV). Positions 93, 96, 115, and 121 each coordinate Zn(2+). One can recognise a B30.2/SPRY domain in the interval 274–465 (CNVSKLYFDV…SPLFLPPPGD (192 aa)).

As to quaternary structure, interacts (via B30.2/SPRY domain) with TAB2 and TAB3. As to expression, ubiquitous.

The protein localises to the cytoplasm. The enzyme catalyses S-ubiquitinyl-[E2 ubiquitin-conjugating enzyme]-L-cysteine + [acceptor protein]-L-lysine = [E2 ubiquitin-conjugating enzyme]-L-cysteine + N(6)-ubiquitinyl-[acceptor protein]-L-lysine.. It participates in protein modification; protein ubiquitination. The protein operates within protein modification; protein sumoylation. E3 ubiquitin-protein and E3 SUMO-protein ligase that acts as a regulator of innate immunity. Acts as a negative regulator of type I interferon IFN-beta production by catalyzing 'Lys-48'-linked polyubiquitination of AZI2/NAP1, leading to its degradation. Mediates 'Lys-48'-linked polyubiquitination and proteasomal degradation of the critical TLR adapter TICAM1, inhibiting TLR3-mediated type I interferon signaling. Acts as positive regulator of the cGAS-STING pathway by acting as a E3 SUMO-protein ligase: mediates sumoylation of CGAS and STING, preventing their degradation and thereby activating the innate immune response to DNA virus. Also acts as a negative regulator of NF-kappa-B signaling independently of its E3 protein ligase activity by promoting lysosome-dependent degradation of TAB2 and TAB3 adapters. The protein is E3 ubiquitin-protein ligase TRIM38 of Homo sapiens (Human).